Here is a 500-residue protein sequence, read N- to C-terminus: Plasma protease C1 inhibitor (500 aa).

The signal sequence occupies residues 1–22 (MASRLTLLTLLLLLLAGDRASS). Low complexity predominate over residues 20–31 (ASSNPNATSSSS). Residues 20 to 43 (ASSNPNATSSSSQDPESLQDRGEG) form a disordered region. The N-linked (GlcNAc...) (complex) asparagine glycan is linked to asparagine 25. O-linked (GalNAc...) threonine glycans are attached at residues threonine 47 and threonine 48. The O-linked (GalNAc...) serine glycan is linked to serine 64. The segment at 65–118 (LPTTNSTTNSATKITANTTDEPTTQPTTEPTTQPTIQPTQPTTQLPTDSPTQPT) is disordered. Low complexity predominate over residues 67 to 118 (TTNSTTNSATKITANTTDEPTTQPTTEPTTQPTIQPTQPTTQLPTDSPTQPT). N-linked (GlcNAc...) asparagine glycosylation is present at asparagine 69. A glycan (O-linked (GalNAc...) threonine) is linked at threonine 71. Residue asparagine 81 is glycosylated (N-linked (GlcNAc...) asparagine). O-linked (GalNAc...) threonine glycosylation is found at threonine 83, threonine 88, threonine 92, and threonine 96. 7 repeat units span residues 85–88 (EPTT), 89–92 (QPTT), 93–96 (EPTT), 97–100 (QPTI), 101–104 (QPTQ), 105–108 (PTTQ), and 116–119 (QPTT). Residues 85–119 (EPTTQPTTEPTTQPTIQPTQPTTQLPTDSPTQPTT) are 7 X 4 AA tandem repeats of [QE]-P-T-[TQ]. 2 cysteine pairs are disulfide-bonded: cysteine 123/cysteine 428 and cysteine 130/cysteine 205. Asparagine 238 and asparagine 253 each carry an N-linked (GlcNAc...) (complex) asparagine glycan. N-linked (GlcNAc...) asparagine; in variant TA glycosylation occurs at asparagine 272. The N-linked (GlcNAc...) (complex) asparagine glycan is linked to asparagine 352.

Belongs to the serpin family. In terms of assembly, interacts with MASP1. (Microbial infection) Binds to E.coli stcE which allows localization of SERPING1 to cell membranes thus protecting the bacteria against complement-mediated lysis. In terms of processing, highly glycosylated (49%) with N- and O-glycosylation. O-glycosylated with core 1 or possibly core 8 glycans. N-glycan heterogeneity at Asn-25: Hex5HexNAc4 (minor), dHex1Hex5HexNAc4 (minor), Hex6HexNAc5 (major) and dHex1Hex6HexNAc5 (minor). Post-translationally, cleaved by C1S in vitro. (Microbial infection) Can be proteolytically cleaved by E.coli stcE.

Its subcellular location is the secreted. Its function is as follows. Serine protease inhibitor, which acrs as a regulator of the classical complement pathway. Forms a proteolytically inactive stoichiometric complex with the C1r or C1s proteases. May also regulate blood coagulation, fibrinolysis and the generation of kinins. Very efficient inhibitor of FXIIa. Inhibits chymotrypsin and kallikrein. This is Plasma protease C1 inhibitor (SERPING1) from Homo sapiens (Human).